A 336-amino-acid chain; its full sequence is Fructose-1,6-bisphosphatase class 1 (336 aa).

Residues Glu90, Asp112, Leu114, and Asp115 each coordinate Mg(2+). Substrate contacts are provided by residues 115 to 118 (DGSS), Asn211, and Lys277. Glu283 provides a ligand contact to Mg(2+).

This sequence belongs to the FBPase class 1 family. Homotetramer. The cofactor is Mg(2+).

Its subcellular location is the cytoplasm. The catalysed reaction is beta-D-fructose 1,6-bisphosphate + H2O = beta-D-fructose 6-phosphate + phosphate. It participates in carbohydrate biosynthesis; gluconeogenesis. This is Fructose-1,6-bisphosphatase class 1 from Pseudomonas fluorescens (strain ATCC BAA-477 / NRRL B-23932 / Pf-5).